Here is a 158-residue protein sequence, read N- to C-terminus: Cyclic pyranopterin monophosphate synthase (158 aa).

Residues 75-77 (LCH) and 113-114 (ME) contribute to the substrate site. Residue Asp128 is part of the active site.

The protein belongs to the MoaC family. As to quaternary structure, homohexamer; trimer of dimers.

It carries out the reaction (8S)-3',8-cyclo-7,8-dihydroguanosine 5'-triphosphate = cyclic pyranopterin phosphate + diphosphate. Its pathway is cofactor biosynthesis; molybdopterin biosynthesis. Its function is as follows. Catalyzes the conversion of (8S)-3',8-cyclo-7,8-dihydroguanosine 5'-triphosphate to cyclic pyranopterin monophosphate (cPMP). The protein is Cyclic pyranopterin monophosphate synthase of Dinoroseobacter shibae (strain DSM 16493 / NCIMB 14021 / DFL 12).